We begin with the raw amino-acid sequence, 367 residues long: Ferrochelatase (367 aa).

His-213 and Glu-294 together coordinate Fe cation.

Belongs to the ferrochelatase family.

It localises to the cytoplasm. It carries out the reaction heme b + 2 H(+) = protoporphyrin IX + Fe(2+). Its pathway is porphyrin-containing compound metabolism; protoheme biosynthesis; protoheme from protoporphyrin-IX: step 1/1. Catalyzes the ferrous insertion into protoporphyrin IX. The sequence is that of Ferrochelatase from Dechloromonas aromatica (strain RCB).